A 256-amino-acid polypeptide reads, in one-letter code: Small ribosomal subunit protein eS1 (256 aa).

The residue at position 2 (alanine 2) is an N-acetylalanine; partial.

It belongs to the eukaryotic ribosomal protein eS1 family. In terms of assembly, component of the small ribosomal subunit. Mature ribosomes consist of a small (40S) and a large (60S) subunit. The 40S subunit contains about 33 different proteins and 1 molecule of RNA (18S). The 60S subunit contains about 49 different proteins and 3 molecules of RNA (25S, 5.8S and 5S).

It localises to the cytoplasm. The sequence is that of Small ribosomal subunit protein eS1 from Lentinula edodes (Shiitake mushroom).